The following is a 159-amino-acid chain: Ribosomal RNA large subunit methyltransferase H (159 aa).

Residues leucine 76, glycine 108, and 127 to 132 (FGLLTL) each bind S-adenosyl-L-methionine.

This sequence belongs to the RNA methyltransferase RlmH family. As to quaternary structure, homodimer.

It is found in the cytoplasm. The enzyme catalyses pseudouridine(1915) in 23S rRNA + S-adenosyl-L-methionine = N(3)-methylpseudouridine(1915) in 23S rRNA + S-adenosyl-L-homocysteine + H(+). Specifically methylates the pseudouridine at position 1915 (m3Psi1915) in 23S rRNA. This Leuconostoc mesenteroides subsp. mesenteroides (strain ATCC 8293 / DSM 20343 / BCRC 11652 / CCM 1803 / JCM 6124 / NCDO 523 / NBRC 100496 / NCIMB 8023 / NCTC 12954 / NRRL B-1118 / 37Y) protein is Ribosomal RNA large subunit methyltransferase H.